The primary structure comprises 196 residues: Pyridoxine/pyridoxamine 5'-phosphate oxidase (196 aa).

Residues 46–51, 61–62, R67, K68, and Q90 each bind FMN; these read RNVLYK and FT. K51 contacts substrate. Residues Y108, R112, and S116 each contribute to the substrate site. FMN is bound by residues 125–126 and W169; that span reads QS. Residue 175 to 177 participates in substrate binding; sequence RLH. FMN is bound at residue R179.

The protein belongs to the pyridoxamine 5'-phosphate oxidase family. Homodimer. Requires FMN as cofactor.

The enzyme catalyses pyridoxamine 5'-phosphate + O2 + H2O = pyridoxal 5'-phosphate + H2O2 + NH4(+). The catalysed reaction is pyridoxine 5'-phosphate + O2 = pyridoxal 5'-phosphate + H2O2. It functions in the pathway cofactor metabolism; pyridoxal 5'-phosphate salvage; pyridoxal 5'-phosphate from pyridoxamine 5'-phosphate: step 1/1. It participates in cofactor metabolism; pyridoxal 5'-phosphate salvage; pyridoxal 5'-phosphate from pyridoxine 5'-phosphate: step 1/1. Functionally, catalyzes the oxidation of either pyridoxine 5'-phosphate (PNP) or pyridoxamine 5'-phosphate (PMP) into pyridoxal 5'-phosphate (PLP). The polypeptide is Pyridoxine/pyridoxamine 5'-phosphate oxidase (Coxiella burnetii (strain RSA 493 / Nine Mile phase I)).